The sequence spans 801 residues: Conserved oligomeric Golgi complex subunit 4 (801 aa).

The tract at residues 397–427 (IRSPSGDGDDEENEEARQERHRLRKEAKEQK) is disordered.

Belongs to the COG4 family. Component of the conserved oligomeric Golgi complex which is composed of eight different subunits and is required for normal Golgi morphology and localization.

The protein localises to the golgi apparatus membrane. Its function is as follows. Required for normal Golgi function. The polypeptide is Conserved oligomeric Golgi complex subunit 4 (cogc-4) (Caenorhabditis elegans).